The primary structure comprises 155 residues: 17.6 kDa class I heat shock protein 1 (155 aa).

Positions 39–154 constitute a sHSP domain; that stretch reads SSSAIANARV…KAQVKSIDIS (116 aa).

Belongs to the small heat shock protein (HSP20) family. In terms of assembly, forms oligomeric structures. Binds to AKR2A.

It is found in the cytoplasm. Functionally, possesses chaperone activity. The polypeptide is 17.6 kDa class I heat shock protein 1 (HSP17.6A) (Arabidopsis thaliana (Mouse-ear cress)).